The sequence spans 181 residues: Segregation and condensation protein B (181 aa).

Belongs to the ScpB family. As to quaternary structure, homodimer. Homodimerization may be required to stabilize the binding of ScpA to the Smc head domains. Component of a cohesin-like complex composed of ScpA, ScpB and the Smc homodimer, in which ScpA and ScpB bind to the head domain of Smc. The presence of the three proteins is required for the association of the complex with DNA.

It localises to the cytoplasm. Participates in chromosomal partition during cell division. May act via the formation of a condensin-like complex containing Smc and ScpA that pull DNA away from mid-cell into both cell halves. The polypeptide is Segregation and condensation protein B (Desulforamulus reducens (strain ATCC BAA-1160 / DSM 100696 / MI-1) (Desulfotomaculum reducens)).